Reading from the N-terminus, the 305-residue chain is D-alanine--D-alanine ligase (305 aa).

The ATP-grasp domain occupies K107–A299. P134–T186 is an ATP binding site. The Mg(2+) site is built by D254, E266, and N268.

The protein belongs to the D-alanine--D-alanine ligase family. Mg(2+) serves as cofactor. Mn(2+) is required as a cofactor.

The protein localises to the cytoplasm. It catalyses the reaction 2 D-alanine + ATP = D-alanyl-D-alanine + ADP + phosphate + H(+). It participates in cell wall biogenesis; peptidoglycan biosynthesis. In terms of biological role, cell wall formation. The polypeptide is D-alanine--D-alanine ligase (Syntrophotalea carbinolica (strain DSM 2380 / NBRC 103641 / GraBd1) (Pelobacter carbinolicus)).